The sequence spans 1627 residues: Pleckstrin homology domain-containing family G member 4B (1627 aa).

Disordered stretches follow at residues 211–349 (YSSC…VQPR), 381–475 (LTGA…GQAV), 501–537 (VSTD…GTGD), 959–1008 (SEAA…PAQP), 1049–1111 (TTAH…SKGL), and 1124–1159 (PLWQ…QVGS). Positions 241 to 251 (GSASCPDTLTS) are enriched in polar residues. 2 stretches are compositionally biased toward basic and acidic residues: residues 262 to 273 (QLRHLPYPERAE) and 310 to 322 (ERPD…DRPK). Over residues 465 to 474 (RPGGHLGGQA) the composition is skewed to gly residues. A compositionally biased stretch (basic and acidic residues) spans 975–985 (PKHERAQEAMR). The span at 1057–1068 (SACSSEPTQTLA) shows a compositional bias: polar residues. Over residues 1070-1081 (RPRKHPQKKMIK) the composition is skewed to basic residues. 2 stretches are compositionally biased toward polar residues: residues 1101–1111 (PDHTSVFSKGL) and 1133–1144 (PVTQSRSLSSPS). The 180-residue stretch at 1161-1340 (RLRHIMAEMI…CFQLRHGNDL (180 aa)) folds into the DH domain. The PH domain maps to 1352–1460 (NLKEQGQLRC…WTDVIGRILW (109 aa)). The segment at 1519–1558 (KGTESQMRGSTAVSSSDHAAPFKRPHSTISDSSTSSSSSQ) is disordered. Polar residues predominate over residues 1521–1535 (TESQMRGSTAVSSSD). Residues 1545–1558 (STISDSSTSSSSSQ) are compositionally biased toward low complexity.

Found in a complex with ARHGEF11 and ARHGEF12; binding to ARHGEF11 and ARHGEF12 enhances CDC42 GEF activity of PLEKHG4B, and PLEKHG4B, in turn, inhibits ARHGEF11- and ARHGEF12-mediated RHOA activation. Interacts with ANXA2; this interaction is required for PLEKHG4B localization to cell-cell adhesions.

Its subcellular location is the basal cell membrane. The protein resides in the cell junction. The protein localises to the nucleus. It is found in the cytoplasm. Guanine nucleotide exchange factor (GEF) which specifically activates small GTPase CDC42 by exchanging bound GDP for free GTP. Plays a role in actin cytoskeletal remodeling in the late stage of cell-cell junction formation by regulating the contractility of actin filaments, which prompts the conversion from 'open' to 'closed' junctions. The polypeptide is Pleckstrin homology domain-containing family G member 4B (Homo sapiens (Human)).